A 253-amino-acid chain; its full sequence is 5-oxoprolinase subunit A (253 aa).

This sequence belongs to the LamB/PxpA family. Forms a complex composed of PxpA, PxpB and PxpC.

It carries out the reaction 5-oxo-L-proline + ATP + 2 H2O = L-glutamate + ADP + phosphate + H(+). In terms of biological role, catalyzes the cleavage of 5-oxoproline to form L-glutamate coupled to the hydrolysis of ATP to ADP and inorganic phosphate. The chain is 5-oxoprolinase subunit A from Shouchella clausii (strain KSM-K16) (Alkalihalobacillus clausii).